The primary structure comprises 550 residues: Eukaryotic translation initiation factor 3 subunit D-2 (550 aa).

Positions 97–126 (RGRGFRPSVHNNPRNVRNQRGRKGNAMGNI) are disordered. Residues 287–301 (KFDMLTVNETSQEPP) form an RNA gate region. The interval 530-550 (SDVSEEEESSEDKPFGLSMNN) is disordered.

The protein belongs to the eIF-3 subunit D family. As to quaternary structure, component of the eukaryotic translation initiation factor 3 (eIF-3) complex. The eIF-3 complex interacts with pix.

Its subcellular location is the cytoplasm. Functionally, mRNA cap-binding component of the eukaryotic translation initiation factor 3 (eIF-3) complex, which is involved in protein synthesis of a specialized repertoire of mRNAs and, together with other initiation factors, stimulates binding of mRNA and methionyl-tRNAi to the 40S ribosome. The eIF-3 complex specifically targets and initiates translation of a subset of mRNAs involved in cell proliferation. In the eIF-3 complex, eif3d specifically recognizes and binds the 7-methylguanosine cap of a subset of mRNAs. The polypeptide is Eukaryotic translation initiation factor 3 subunit D-2 (Drosophila willistoni (Fruit fly)).